The sequence spans 119 residues: Large ribosomal subunit protein bL20 (119 aa).

The protein belongs to the bacterial ribosomal protein bL20 family.

In terms of biological role, binds directly to 23S ribosomal RNA and is necessary for the in vitro assembly process of the 50S ribosomal subunit. It is not involved in the protein synthesizing functions of that subunit. The sequence is that of Large ribosomal subunit protein bL20 from Clostridium perfringens (strain ATCC 13124 / DSM 756 / JCM 1290 / NCIMB 6125 / NCTC 8237 / Type A).